We begin with the raw amino-acid sequence, 749 residues long: MPALPLDQLQITHKDPKTGQPKTSAALNPEQKADRYFVLYKPPPKDNIPALVEEYLERANFVANDLDWLLALPHDKFWCQVIFDETLQKCLDSYLHYVPRKFDEWVAPTPEVADMQNHLHRSVFLTFLRMSTHKESKDHFISPSAFGEILYNNFLFDIPKILDLCVLFGKGNSPLLQKMIGNIFTQQPSYYTDLDETIPTILQVFSNILQHCGLQGDGTSTTPQKLGERSPLTPSDMPLLELKDIVLYLCDTSTTLWAFLDIFPLACQTFQKHDFCYRLASFYEMAIPELESAIKKRRLEDSKLLGDMWQRLSHSKKKLMEVFHIILNQICLLPILESSCDNIQGFIEEFLQIFSSLLQEKRFLRDYDTFSPVAEDISLLQQASSALDETRTAYILQAVESAWEGVDRQKIKDIKDPPRAKGSNNEVTVTAEPVSEMPSQLENLEEDEECMGAAAALGPAVSGVELDSLISQVKDLLPDLGEGFILACLEHYSYDSEQVINNILEDRLAPELSQLDRGLERQVKPDPTPLLSSRHNIFQNDEFDVFSRDSVDLSRVHKGRRKEENVRSLVNDKQAVVAQWQRYQKYSVVVEEVPLQPGEYQADDYEDEYDDTYDGNQVGANDADSDDELISRRPFTIPQVLRTKMPGEVQEEEWDEEDEVEEEAPKPDHFIQDPAVLREKAEARRMAFLARKGYRPENSTAVTGGPRGHGQSRETTQERRKKEANKAARANHNRRTMADRKRSKGMIPS.

The tract at residues 1–26 (MPALPLDQLQITHKDPKTGQPKTSAA) is disordered. Threonine 233 carries the phosphothreonine modification. A CUE domain is found at 465–508 (ELDSLISQVKDLLPDLGEGFILACLEHYSYDSEQVINNILEDRL). Disordered stretches follow at residues 606–675 (EDEY…QDPA) and 689–749 (LARK…MIPS). Serine 625 is subject to Phosphoserine. Residues 649–662 (VQEEEWDEEDEVEE) are compositionally biased toward acidic residues. Basic and acidic residues-rich tracts occupy residues 663–675 (EAPK…QDPA) and 711–726 (QSRE…EANK).

The protein belongs to the ASCC2 family. In terms of assembly, identified in the ASCC complex that contains ASCC1, ASCC2 and ASCC3. Interacts directly with ASCC3. The ASCC complex interacts with ALKBH3. Interacts (via CUE domain) with 'Lys-63'-linked polyubiquitin chains, but not with 'Lys-48'-linked polyubiquitin chains. Part of the ASC-1 complex, that contains TRIP4, ASCC1, ASCC2 and ASCC3. Component of the RQT (ribosome quality control trigger) complex, that contains ASCC2, ASCC3 and TRIP4. Interacts with CSRP1. Interacts with PRPF8, a component of the spliceosome. Interacts with ZCCHC4.

The protein localises to the nucleus. Its subcellular location is the nucleus speckle. Its function is as follows. Ubiquitin-binding protein involved in DNA repair and rescue of stalled ribosomes. Plays a role in DNA damage repair as component of the ASCC complex. Recruits ASCC3 and ALKBH3 to sites of DNA damage by binding to polyubiquitinated proteins that have 'Lys-63'-linked polyubiquitin chains. Part of the ASC-1 complex that enhances NF-kappa-B, SRF and AP1 transactivation. Involved in activation of the ribosome quality control (RQC) pathway, a pathway that degrades nascent peptide chains during problematic translation. Specifically recognizes and binds RPS20/uS10 ubiquitinated by ZNF598, promoting recruitment of the RQT (ribosome quality control trigger) complex on stalled ribosomes, followed by disassembly of stalled ribosomes. This chain is Activating signal cointegrator 1 complex subunit 2 (Ascc2), found in Mus musculus (Mouse).